The primary structure comprises 359 residues: Guanine nucleotide-binding protein subunit alpha-11 (359 aa).

Residues cysteine 9 and cysteine 10 are each lipidated (S-palmitoyl cysteine). The G-alpha domain occupies 38-359 (RELKLLLLGT…QLNLKEYNLV (322 aa)). The segment at 41–54 (KLLLLGTGESGKST) is G1 motif. Residues 46–53 (GTGESGKS) and 180–183 (LRVR) contribute to the GTP site. Serine 53 is a binding site for Mg(2+). The segment at 178 to 186 (DVLRVRVPT) is G2 motif. Threonine 186 lines the Mg(2+) pocket. Residues 201–210 (FRMVDVGGQR) form a G3 motif region. The segment at 270-277 (ILFLNKKD) is G4 motif. Residues 274 to 277 (NKKD) and alanine 331 each bind GTP. Positions 329-334 (TCATDT) are G5 motif.

This sequence belongs to the G-alpha family. G(q) subfamily. As to quaternary structure, g proteins are composed of 3 units; alpha, beta and gamma. The alpha chain contains the guanine nucleotide binding site. Interacts with RGS22. Interacts with NTSR1.

Its subcellular location is the cell membrane. It localises to the cytoplasm. The enzyme catalyses GTP + H2O = GDP + phosphate + H(+). Its function is as follows. Guanine nucleotide-binding proteins (G proteins) function as transducers downstream of G protein-coupled receptors (GPCRs) in numerous signaling cascades. The alpha chain contains the guanine nucleotide binding site and alternates between an active, GTP-bound state and an inactive, GDP-bound state. Signaling by an activated GPCR promotes GDP release and GTP binding. The alpha subunit has a low GTPase activity that converts bound GTP to GDP, thereby terminating the signal. Both GDP release and GTP hydrolysis are modulated by numerous regulatory proteins. Signaling is mediated via phospholipase C-beta-dependent inositol lipid hydrolysis for signal propagation: activates phospholipase C-beta: following GPCR activation, GNA11 activates PLC-beta (PLCB1, PLCB2, PLCB3 or PLCB4), leading to production of diacylglycerol (DAG) and inositol 1,4,5-trisphosphate (IP3). Transduces FFAR4 signaling in response to long-chain fatty acids (LCFAs). Together with GNAQ, required for heart development. In the respiratory epithelium, transmits OXGR1-dependent signals that lead to downstream intracellular Ca(2+) release and mucocilliary clearance of airborne pathogens. The sequence is that of Guanine nucleotide-binding protein subunit alpha-11 (Gna11) from Rattus norvegicus (Rat).